Consider the following 56-residue polypeptide: MCCGPCGPCCGPCCGPCCGPCGPCGGGCGPCYGPNVCGPCYACGPCGGCYCGYPCC.

Belongs to the MST(3)CGP family. As to expression, testis.

In Drosophila melanogaster (Fruit fly), this protein is Male-specific sperm protein Mst87F (Mst87F).